Here is an 879-residue protein sequence, read N- to C-terminus: Alanine--tRNA ligase 1 (879 aa).

4 residues coordinate Zn(2+): His-566, His-570, Cys-668, and His-672.

This sequence belongs to the class-II aminoacyl-tRNA synthetase family. Zn(2+) serves as cofactor.

The protein localises to the cytoplasm. The catalysed reaction is tRNA(Ala) + L-alanine + ATP = L-alanyl-tRNA(Ala) + AMP + diphosphate. Its function is as follows. Catalyzes the attachment of alanine to tRNA(Ala) in a two-step reaction: alanine is first activated by ATP to form Ala-AMP and then transferred to the acceptor end of tRNA(Ala). Also edits incorrectly charged Ser-tRNA(Ala) and Gly-tRNA(Ala) via its editing domain. This is Alanine--tRNA ligase 1 from Lachnoclostridium phytofermentans (strain ATCC 700394 / DSM 18823 / ISDg) (Clostridium phytofermentans).